Reading from the N-terminus, the 814-residue chain is Outer membrane usher protein SefC (814 aa).

An N-terminal signal peptide occupies residues 1 to 30; the sequence is MKKTTITLFVLTSVFHSGNVFSRQYNFDYG. Cys792 and Cys813 are oxidised to a cystine.

The protein belongs to the fimbrial export usher family.

The protein localises to the cell outer membrane. Its function is as follows. Involved in the export and assembly of the SefA fimbrial subunit. This chain is Outer membrane usher protein SefC (sefC), found in Salmonella enteritidis.